The primary structure comprises 395 residues: S-adenosylmethionine synthase 2 (395 aa).

Glu-9 provides a ligand contact to Mg(2+). His-15 is a binding site for ATP. Glu-43 is a K(+) binding site. 2 residues coordinate L-methionine: Glu-56 and Gln-99. Residues 167-169 (DGK), 235-238 (SGRF), Asp-246, 252-253 (RK), Ala-269, Lys-273, and Lys-277 each bind ATP. Position 246 (Asp-246) interacts with L-methionine. L-methionine is bound at residue Lys-277.

It belongs to the AdoMet synthase family. In terms of assembly, homotetramer. The cofactor is Mn(2+). Mg(2+) serves as cofactor. Requires Co(2+) as cofactor. K(+) is required as a cofactor.

The protein resides in the cytoplasm. It catalyses the reaction L-methionine + ATP + H2O = S-adenosyl-L-methionine + phosphate + diphosphate. It participates in amino-acid biosynthesis; S-adenosyl-L-methionine biosynthesis; S-adenosyl-L-methionine from L-methionine: step 1/1. Functionally, catalyzes the formation of S-adenosylmethionine from methionine and ATP. The reaction comprises two steps that are both catalyzed by the same enzyme: formation of S-adenosylmethionine (AdoMet) and triphosphate, and subsequent hydrolysis of the triphosphate. The protein is S-adenosylmethionine synthase 2 (METK2) of Suaeda salsa (Seepweed).